The following is a 446-amino-acid chain: Argininosuccinate synthase (446 aa).

ATP is bound by residues 17–25 (AFSGGLDTS) and Ala43. Tyr99 serves as a coordination point for L-citrulline. Residues Gly129 and Thr131 each coordinate ATP. Thr131, Asn135, and Asp136 together coordinate L-aspartate. Position 135 (Asn135) interacts with L-citrulline. Residue Asp136 participates in ATP binding. The L-citrulline site is built by Arg139 and Ser192. Residue Asp194 coordinates ATP. Residues Thr201, Glu203, and Glu280 each coordinate L-citrulline.

This sequence belongs to the argininosuccinate synthase family. Type 2 subfamily. Homotetramer.

Its subcellular location is the cytoplasm. It catalyses the reaction L-citrulline + L-aspartate + ATP = 2-(N(omega)-L-arginino)succinate + AMP + diphosphate + H(+). The protein operates within amino-acid biosynthesis; L-arginine biosynthesis; L-arginine from L-ornithine and carbamoyl phosphate: step 2/3. The polypeptide is Argininosuccinate synthase (Variovorax paradoxus (strain S110)).